We begin with the raw amino-acid sequence, 263 residues long: Reductase pytE (263 aa).

This sequence belongs to the avfA family.

It participates in secondary metabolite biosynthesis. Reductase; part of the gene cluster that mediates the biosynthesis of pyranterreones, a family of antioxidative compounds. The first step of pyranonigrins biosynthesis is performed by the hybrid PKS-NRPS synthetase pytA that condenses 4 malonyl-CoA units ato the acetyl starter unit by the modular PKS of pytA. The acyl chain is then connected to an L-serine through the amide bond by the modular NRPS of pytA. A tetramic acid is formed and released from the PKS-NRPS pytA to give pyranterreone 5 with the help of the thioesterase pytI. Pyranterreone 5 could be methylated by pytC to afford pyranterreone 6. Both pyranterreones 5 and 6 are subsequently oxidized by the FAD-linked oxidoreductase pytB and the cytochrome P450 monooxygenase pytD to form the fused gamma-pyrone core, resulting in pyranterreones 7 and 11, respectively. The hydroxy group at C-8 of pyranterreones 7 and 11 are dehydrated by the aspartyl protease pytH to form a delta-7 double bond to give pyranterreones 3 and 1, 2 accordingly. The exo-methylene of pyranterreone 3 could be reduced into a pendant methyl by reductase pytE to provide pyranterreone 4, also known as cordylactam. Pyranterreone 4 can be reconverted to pyranterreone 3 through pytB-catalyzed dehydrogenation or further oxidized to pyranterreones 9 and 10. This Aspergillus terreus protein is Reductase pytE.